A 495-amino-acid polypeptide reads, in one-letter code: 3-octaprenyl-4-hydroxybenzoate carboxy-lyase (495 aa).

Asparagine 172 is a binding site for Mn(2+). Residues isoleucine 175–arginine 177, arginine 189–leucine 191, and arginine 194–glycine 195 each bind prenylated FMN. Position 238 (glutamate 238) interacts with Mn(2+). Residue aspartate 287 is the Proton donor of the active site.

This sequence belongs to the UbiD family. As to quaternary structure, homohexamer. Requires prenylated FMN as cofactor. Mn(2+) serves as cofactor.

The protein localises to the cell membrane. It carries out the reaction a 4-hydroxy-3-(all-trans-polyprenyl)benzoate + H(+) = a 2-(all-trans-polyprenyl)phenol + CO2. It functions in the pathway cofactor biosynthesis; ubiquinone biosynthesis. In terms of biological role, catalyzes the decarboxylation of 3-octaprenyl-4-hydroxy benzoate to 2-octaprenylphenol, an intermediate step in ubiquinone biosynthesis. This chain is 3-octaprenyl-4-hydroxybenzoate carboxy-lyase, found in Yersinia pseudotuberculosis serotype O:1b (strain IP 31758).